A 327-amino-acid chain; its full sequence is Acetyl-coenzyme A carboxylase carboxyl transferase subunit beta (327 aa).

Positions 24–293 (LWIKCPDTGQ…LTVTTAVEAP (270 aa)) constitute a CoA carboxyltransferase N-terminal domain. The segment covering 293–311 (PAEAAAKAEPEATTTEQPV) has biased composition (low complexity). A disordered region spans residues 293-327 (PAEAAAKAEPEATTTEQPVAPAPTEPPAQPAAPQA). Over residues 312–327 (APAPTEPPAQPAAPQA) the composition is skewed to pro residues.

Belongs to the AccD/PCCB family. In terms of assembly, acetyl-CoA carboxylase is a heterohexamer composed of biotin carboxyl carrier protein (AccB), biotin carboxylase (AccC) and two subunits each of ACCase subunit alpha (AccA) and ACCase subunit beta (AccD).

The protein resides in the cytoplasm. It carries out the reaction N(6)-carboxybiotinyl-L-lysyl-[protein] + acetyl-CoA = N(6)-biotinyl-L-lysyl-[protein] + malonyl-CoA. The protein operates within lipid metabolism; malonyl-CoA biosynthesis; malonyl-CoA from acetyl-CoA: step 1/1. Component of the acetyl coenzyme A carboxylase (ACC) complex. Biotin carboxylase (BC) catalyzes the carboxylation of biotin on its carrier protein (BCCP) and then the CO(2) group is transferred by the transcarboxylase to acetyl-CoA to form malonyl-CoA. This is Acetyl-coenzyme A carboxylase carboxyl transferase subunit beta from Rhodopseudomonas palustris (strain TIE-1).